The sequence spans 47 residues: Large ribosomal subunit protein eL40 (47 aa).

The protein belongs to the eukaryotic ribosomal protein eL40 family.

This is Large ribosomal subunit protein eL40 from Methanococcus maripaludis (strain C5 / ATCC BAA-1333).